The chain runs to 447 residues: tRNA-2-methylthio-N(6)-dimethylallyladenosine synthase (447 aa).

One can recognise an MTTase N-terminal domain in the interval 3 to 120 (KKLYIETHGC…LPEMIDAART (118 aa)). [4Fe-4S] cluster contacts are provided by cysteine 12, cysteine 49, cysteine 83, cysteine 157, cysteine 161, and cysteine 164. One can recognise a Radical SAM core domain in the interval 143 to 375 (RVDGPSAFVS…QHRINQYGFE (233 aa)). One can recognise a TRAM domain in the interval 378-442 (RRMVGTVQRI…PHSLRGTLLD (65 aa)).

This sequence belongs to the methylthiotransferase family. MiaB subfamily. In terms of assembly, monomer. It depends on [4Fe-4S] cluster as a cofactor.

It is found in the cytoplasm. The catalysed reaction is N(6)-dimethylallyladenosine(37) in tRNA + (sulfur carrier)-SH + AH2 + 2 S-adenosyl-L-methionine = 2-methylsulfanyl-N(6)-dimethylallyladenosine(37) in tRNA + (sulfur carrier)-H + 5'-deoxyadenosine + L-methionine + A + S-adenosyl-L-homocysteine + 2 H(+). In terms of biological role, catalyzes the methylthiolation of N6-(dimethylallyl)adenosine (i(6)A), leading to the formation of 2-methylthio-N6-(dimethylallyl)adenosine (ms(2)i(6)A) at position 37 in tRNAs that read codons beginning with uridine. This is tRNA-2-methylthio-N(6)-dimethylallyladenosine synthase from Ectopseudomonas mendocina (strain ymp) (Pseudomonas mendocina).